Reading from the N-terminus, the 345-residue chain is Large ribosomal subunit protein uL4 (345 aa).

A2 carries the post-translational modification N-acetylalanine.

This sequence belongs to the universal ribosomal protein uL4 family.

This Caenorhabditis elegans protein is Large ribosomal subunit protein uL4 (rpl-4).